The sequence spans 214 residues: tRNA (guanine-N(7)-)-methyltransferase (214 aa).

Residues aspartate 35, glutamate 60, asparagine 87, and aspartate 113 each coordinate S-adenosyl-L-methionine. Aspartate 113 is an active-site residue. Lysine 117 and aspartate 149 together coordinate substrate.

The protein belongs to the class I-like SAM-binding methyltransferase superfamily. TrmB family.

It catalyses the reaction guanosine(46) in tRNA + S-adenosyl-L-methionine = N(7)-methylguanosine(46) in tRNA + S-adenosyl-L-homocysteine. The protein operates within tRNA modification; N(7)-methylguanine-tRNA biosynthesis. In terms of biological role, catalyzes the formation of N(7)-methylguanine at position 46 (m7G46) in tRNA. In Prochlorococcus marinus (strain NATL2A), this protein is tRNA (guanine-N(7)-)-methyltransferase.